Here is a 177-residue protein sequence, read N- to C-terminus: MSRVGKMLVAVPQGVDVSINEDLISVKGSLGTLLRPAHRLVKVQNEAGKLSFTPLDESAEANAMSGTMRALVANMVNGVSKGFQKKLSLVGVGYRAQAQGQKLNLQIGFSHPVVKEMPEGIKVECPTQTEILIKGADRQVVGQLAAEVRAFRPPEPYKGKGIRYSDEKVAIKETKKK.

It belongs to the universal ribosomal protein uL6 family. In terms of assembly, part of the 50S ribosomal subunit.

Functionally, this protein binds to the 23S rRNA, and is important in its secondary structure. It is located near the subunit interface in the base of the L7/L12 stalk, and near the tRNA binding site of the peptidyltransferase center. The chain is Large ribosomal subunit protein uL6 from Leptothrix cholodnii (strain ATCC 51168 / LMG 8142 / SP-6) (Leptothrix discophora (strain SP-6)).